The sequence spans 387 residues: Protein PHYTOCHROME KINASE SUBSTRATE 3 (387 aa).

3 disordered regions span residues 1–21 (MDAEKKSAHFRQISSYKPQLL), 74–128 (HEKE…CNSQ), and 242–271 (LSTKNNNHNNNGNNSSMSSNTQEEETASVA). A compositionally biased stretch (polar residues) spans 12–21 (QISSYKPQLL). Basic and acidic residues predominate over residues 74 to 83 (HEKENTHDHP). Positions 114–128 (HGTPSVRSESSCNSQ) are enriched in polar residues. The span at 242 to 261 (LSTKNNNHNNNGNNSSMSSN) shows a compositional bias: low complexity.

Belongs to the PKS family.

Its function is as follows. Probably involved in the phytochrome signaling pathway. The chain is Protein PHYTOCHROME KINASE SUBSTRATE 3 (PKS3) from Arabidopsis thaliana (Mouse-ear cress).